The sequence spans 353 residues: Diacetylchitobiose uptake system permease protein NgcF (353 aa).

The segment at 1–24 (MKDTIPTAETASRRPEPAARGGRP) is disordered. 6 helical membrane-spanning segments follow: residues 36–56 (FFLA…LIPF), 100–120 (LLAA…AVAI), 141–161 (IISF…WAQM), 197–217 (VMFV…IAAI), 254–274 (AYIY…AMVP), and 303–323 (TAMG…VFLV). The ABC transmembrane type-1 domain occupies 95 to 320 (LRNVALLAAF…AVTLVFAALV (226 aa)). Residues 329–353 (GGEGESKRKAPGSRARRAAAKGGAR) form a disordered region. A compositionally biased stretch (basic residues) spans 337–353 (KAPGSRARRAAAKGGAR).

This sequence belongs to the binding-protein-dependent transport system permease family. In terms of assembly, the complex is composed of two ATP-binding proteins (MsiK), two transmembrane proteins (NgcF and NgcG) and a solute-binding protein (NgcE).

The protein resides in the cell membrane. In terms of biological role, part of the ABC transporter complex NgcEFG-MsiK involved in N,N'-diacetylchitobiose ((GlcNAc)2) uptake. Responsible for the translocation of the substrate across the membrane. This Streptomyces coelicolor (strain ATCC BAA-471 / A3(2) / M145) protein is Diacetylchitobiose uptake system permease protein NgcF.